We begin with the raw amino-acid sequence, 138 residues long: Spermatid nuclear transition protein 4 (138 aa).

Residues 1–11 are compositionally biased toward basic and acidic residues; that stretch reads AKVSRKPREPR. Residues 1–138 form a disordered region; sequence AKVSRKPREP…QGVTRRGRRY (138 aa). S4 carries the post-translational modification Phosphoserine; by PKC. Positions 5–23 match the Nuclear localization signal motif; the sequence is RKPREPRTAVTQSTRRIKR. 3 stretches are compositionally biased toward basic residues: residues 19-34, 43-57, and 65-74; these read RRIKRKKTLSKPRSRG, MKIKRALRRNLRRKI, and KKAKKARKHF. T26 bears the Phosphothreonine; by PKA mark. The Nuclear localization signal signature appears at 54-72; sequence RRKIQTSAGQPKKAKKARK. Positions 86–101 are enriched in low complexity; that stretch reads NKKTNQNKRQNQNKRQ. Residues 120-131 are compositionally biased toward polar residues; that stretch reads PTTSCKWCSQGV.

The protein localises to the nucleus. The protein resides in the chromosome. In terms of biological role, involved in nuclear basic protein transition: histones are replaced by spermatid specific proteins which are themselves replaced by protamines in late spermatids. The sequence is that of Spermatid nuclear transition protein 4 (TNP4) from Sus scrofa (Pig).